A 311-amino-acid polypeptide reads, in one-letter code: Probable manganese-dependent inorganic pyrophosphatase (311 aa).

Mn(2+)-binding residues include H9, D13, D15, D77, H99, and D151.

Belongs to the PPase class C family. Mn(2+) is required as a cofactor.

It localises to the cytoplasm. It catalyses the reaction diphosphate + H2O = 2 phosphate + H(+). The chain is Probable manganese-dependent inorganic pyrophosphatase from Streptococcus pneumoniae (strain JJA).